The primary structure comprises 204 residues: Fluoride-specific ion channel FluC 3 (204 aa).

Residues 1-16 (MRADESGPERESREPT) show a composition bias toward basic and acidic residues. The interval 1–53 (MRADESGPERESREPTHIPGAEPELGGEPTPRGEPGPGFEPGPGGEPAPSRAP) is disordered. Positions 32 to 46 (RGEPGPGFEPGPGGE) are enriched in pro residues. 4 consecutive transmembrane segments (helical) span residues 62-82 (VLAA…ALGL), 96-116 (FAVN…VLEI), 125-145 (PFAA…MVDT), and 158-178 (AFNV…GLAI). Na(+) is bound by residues Gly-133 and Thr-136.

Belongs to the fluoride channel Fluc/FEX (TC 1.A.43) family.

The protein localises to the cell membrane. It catalyses the reaction fluoride(in) = fluoride(out). Na(+) is not transported, but it plays an essential structural role and its presence is essential for fluoride channel function. Its function is as follows. Fluoride-specific ion channel. Important for reducing fluoride concentration in the cell, thus reducing its toxicity. In Streptomyces avermitilis (strain ATCC 31267 / DSM 46492 / JCM 5070 / NBRC 14893 / NCIMB 12804 / NRRL 8165 / MA-4680), this protein is Fluoride-specific ion channel FluC 3.